We begin with the raw amino-acid sequence, 400 residues long: Acetate kinase (400 aa).

Mg(2+) is bound at residue N10. K17 serves as a coordination point for ATP. Position 91 (R91) interacts with substrate. The active-site Proton donor/acceptor is D150. Residues 210–214 (HLGNG), 285–287 (DCR), and 333–337 (GIGEN) contribute to the ATP site. Residue E387 participates in Mg(2+) binding.

The protein belongs to the acetokinase family. As to quaternary structure, homodimer. Requires Mg(2+) as cofactor. Mn(2+) is required as a cofactor.

The protein localises to the cytoplasm. It carries out the reaction acetate + ATP = acetyl phosphate + ADP. Its pathway is metabolic intermediate biosynthesis; acetyl-CoA biosynthesis; acetyl-CoA from acetate: step 1/2. Catalyzes the formation of acetyl phosphate from acetate and ATP. Can also catalyze the reverse reaction. The polypeptide is Acetate kinase (Proteus mirabilis (strain HI4320)).